The following is a 140-amino-acid chain: Ribosome-binding factor A (140 aa).

Over residues 118 to 133 (DEAKQQKHNGKDKTDT) the composition is skewed to basic and acidic residues. Residues 118–140 (DEAKQQKHNGKDKTDTADSEGEE) form a disordered region.

It belongs to the RbfA family. As to quaternary structure, monomer. Binds 30S ribosomal subunits, but not 50S ribosomal subunits or 70S ribosomes.

The protein resides in the cytoplasm. Functionally, one of several proteins that assist in the late maturation steps of the functional core of the 30S ribosomal subunit. Associates with free 30S ribosomal subunits (but not with 30S subunits that are part of 70S ribosomes or polysomes). Required for efficient processing of 16S rRNA. May interact with the 5'-terminal helix region of 16S rRNA. This is Ribosome-binding factor A from Shewanella woodyi (strain ATCC 51908 / MS32).